The following is an 827-amino-acid chain: Periplasmic nitrate reductase (827 aa).

The segment at residues 1–32 (MTLSRRAFIKQTAAATAASAAGVVLPGVDALA) is a signal peptide (tat-type signal). The 4Fe-4S Mo/W bis-MGD-type domain occupies 37-93 (LTWSKAPCRFCGTGCGVSVGVKNGKVVATQGDPQAEVNRGLNCVKGYFLSKIMYGQD). Residues C44, C47, C51, and C79 each contribute to the [4Fe-4S] cluster site. Mo-bis(molybdopterin guanine dinucleotide) is bound by residues K81, Q148, N173, C177, 241–245 (STFEH), 260–262 (QSD), M371, Q375, N481, 507–508 (SD), K530, D557, and 717–726 (TGRVLEHWHS). Substrate is bound at residue W793. Positions 801 and 818 each coordinate Mo-bis(molybdopterin guanine dinucleotide).

This sequence belongs to the prokaryotic molybdopterin-containing oxidoreductase family. NasA/NapA/NarB subfamily. Component of the periplasmic nitrate reductase NapAB complex composed of NapA and NapB. [4Fe-4S] cluster serves as cofactor. The cofactor is Mo-bis(molybdopterin guanine dinucleotide). In terms of processing, predicted to be exported by the Tat system. The position of the signal peptide cleavage has not been experimentally proven.

Its subcellular location is the periplasm. The catalysed reaction is 2 Fe(II)-[cytochrome] + nitrate + 2 H(+) = 2 Fe(III)-[cytochrome] + nitrite + H2O. Functionally, catalytic subunit of the periplasmic nitrate reductase complex NapAB. Receives electrons from NapB and catalyzes the reduction of nitrate to nitrite. This chain is Periplasmic nitrate reductase, found in Paraburkholderia xenovorans (strain LB400).